The primary structure comprises 177 residues: uncharacterized protein (177 aa).

This is an uncharacterized protein from Homo sapiens (Human).